Here is a 158-residue protein sequence, read N- to C-terminus: Snaclec mucetin subunit alpha (158 aa).

An N-terminal signal peptide occupies residues 1–23; that stretch reads MGRFTFVSFGLLVVFLSLSGTGA. Cystine bridges form between Cys-27–Cys-38, Cys-55–Cys-152, and Cys-127–Cys-144. The C-type lectin domain maps to 34 to 153; sequence YDRYCYQAFS…CGRENPFVCK (120 aa).

The protein belongs to the snaclec family. Dimer and tetramer of heterodimers of alpha and beta subunits ((alphabeta)(2) and (alphabeta)(4)); disulfide-linked. These two multimeric forms are found. The complex is glycosylated. In terms of tissue distribution, expressed by the venom gland.

It localises to the secreted. Functionally, potent platelet activator that acts via GPIb (GP1BA/GP1BB). After activation by the toxin, the receptor is redistributed on platelet surface thanks to cytoskeletal translocation. The indirect activation of integrin alpha-IIb/beta-3 (ITGA2B/ITGB3) also induced by the toxin is downstream the cytoskeletal translocation of GPIb. This chain is Snaclec mucetin subunit alpha, found in Protobothrops mucrosquamatus (Taiwan habu).